The sequence spans 158 residues: Photosystem I assembly protein Ycf3 (158 aa).

3 TPR repeats span residues 35 to 68 (AFSY…EEDV), 72 to 105 (SYII…NPRL), and 113 to 146 (AVIY…APGQ).

Belongs to the Ycf3 family.

Its subcellular location is the plastid. It localises to the chloroplast thylakoid membrane. In terms of biological role, essential for the assembly of the photosystem I (PSI) complex. May act as a chaperone-like factor to guide the assembly of the PSI subunits. This chain is Photosystem I assembly protein Ycf3, found in Cyanidioschyzon merolae (strain NIES-3377 / 10D) (Unicellular red alga).